Here is a 159-residue protein sequence, read N- to C-terminus: Phosphopantetheine adenylyltransferase (159 aa).

Threonine 9 is a binding site for substrate. Residues 9–10 (TF) and histidine 17 each bind ATP. Substrate is bound by residues lysine 41, leucine 73, and arginine 87. ATP-binding positions include 88 to 90 (GLR), glutamate 98, and 123 to 129 (YSYISST).

Belongs to the bacterial CoaD family. As to quaternary structure, homohexamer. Mg(2+) serves as cofactor.

Its subcellular location is the cytoplasm. The enzyme catalyses (R)-4'-phosphopantetheine + ATP + H(+) = 3'-dephospho-CoA + diphosphate. It functions in the pathway cofactor biosynthesis; coenzyme A biosynthesis; CoA from (R)-pantothenate: step 4/5. Functionally, reversibly transfers an adenylyl group from ATP to 4'-phosphopantetheine, yielding dephospho-CoA (dPCoA) and pyrophosphate. The sequence is that of Phosphopantetheine adenylyltransferase from Azotobacter vinelandii (strain DJ / ATCC BAA-1303).